The following is a 337-amino-acid chain: 5-formaminoimidazole-4-carboxamide-1-(beta)-D-ribofuranosyl 5'-monophosphate synthetase (337 aa).

5-amino-1-(5-phospho-beta-D-ribosyl)imidazole-4-carboxamide contacts are provided by His23 and Ser87. Positions Met121–Lys328 constitute an ATP-grasp domain. ATP is bound by residues Pro144–Tyr191 and Glu213. Asn233 serves as a coordination point for 5-amino-1-(5-phospho-beta-D-ribosyl)imidazole-4-carboxamide. Mg(2+) contacts are provided by Glu272 and Glu285.

This sequence belongs to the phosphohexose mutase family. Mg(2+) is required as a cofactor. Requires Mn(2+) as cofactor.

The catalysed reaction is 5-amino-1-(5-phospho-beta-D-ribosyl)imidazole-4-carboxamide + formate + ATP = 5-formamido-1-(5-phospho-D-ribosyl)imidazole-4-carboxamide + ADP + phosphate. It functions in the pathway purine metabolism; IMP biosynthesis via de novo pathway; 5-formamido-1-(5-phospho-D-ribosyl)imidazole-4-carboxamide from 5-amino-1-(5-phospho-D-ribosyl)imidazole-4-carboxamide (formate route): step 1/1. Its function is as follows. Catalyzes the ATP- and formate-dependent formylation of 5-aminoimidazole-4-carboxamide-1-beta-d-ribofuranosyl 5'-monophosphate (AICAR) to 5-formaminoimidazole-4-carboxamide-1-beta-d-ribofuranosyl 5'-monophosphate (FAICAR) in the absence of folates. The polypeptide is 5-formaminoimidazole-4-carboxamide-1-(beta)-D-ribofuranosyl 5'-monophosphate synthetase (Caldivirga maquilingensis (strain ATCC 700844 / DSM 13496 / JCM 10307 / IC-167)).